The primary structure comprises 493 residues: Alginate production protein AlgE (493 aa).

Positions 1-25 are cleaved as a signal peptide; the sequence is MKLNPLMAAGMGLGFTLFWACPTLA. Positions 93 to 111 are enriched in polar residues; it reads DPLEQSNSDGSGTQTSRGT. The tract at residues 93 to 115 is disordered; that stretch reads DPLEQSNSDGSGTQTSRGTASER.

The protein belongs to the AlgE family.

Its subcellular location is the cell outer membrane. The protein operates within glycan biosynthesis; alginate biosynthesis. Functionally, has non-porin-like, channel-forming properties and probably functions as an alginate permeability pore. The protein is Alginate production protein AlgE (algE) of Pseudomonas syringae pv. tomato (strain ATCC BAA-871 / DC3000).